The chain runs to 512 residues: MNCPAMTASPSSSSSSSYSTFRPPPPLLPQLSNDSQRSVVMHCTRLPFEAFAATSSNRLLGKHSLPLRAALVTSNPLNISSSSVISDAISSSSVITDDAKIGVLLLNLGGPETLDDVQPFLFNLFADPDIIRLPPVFQFLQKPLAQFISVARAPKSKEGYASIGGGSPLRHITDAQAEELRKCLWEKNVPAKVYVGMRYWHPFTEEAIEQIKRDGITKLVVLPLYPQFSISTSGSSLRLLERIFREDEYLVNMQHTVIPSWYQREGYIKAMANLIQSELGKFGSPNQVVIFFSAHGVPLAYVEEAGDPYKAEMEECVDLIMEELDKRKITNAYTLAYQSRVGPVEWLKPYTEEAITELGKKGVENLLAVPISFVSEHIETLEEIDVEYKELALKSGIKNWGRVPALGTEPMFISDLADAVVESLPYVGAMAVSNLEARQSLVPLGSVEELLATYDSQRRELPAPVTMWEWGWTKSAETWNGRAAMLAVLALLVLEVTTGKGFLHQWGILPSL.

Residues 1–32 (MNCPAMTASPSSSSSSSYSTFRPPPPLLPQLS) are disordered. The N-terminal 83 residues, 1 to 83 (MNCPAMTASP…SNPLNISSSS (83 aa)), are a transit peptide targeting the chloroplast. The span at 9 to 21 (SPSSSSSSSYSTF) shows a compositional bias: low complexity. N-acetylvaline is present on valine 84.

It belongs to the ferrochelatase family. In terms of tissue distribution, expressed in leaves and flowers.

Its subcellular location is the plastid. The protein resides in the chloroplast membrane. It is found in the chloroplast thylakoid membrane. It catalyses the reaction heme b + 2 H(+) = protoporphyrin IX + Fe(2+). It participates in porphyrin-containing compound metabolism; protoheme biosynthesis; protoheme from protoporphyrin-IX: step 1/1. Catalyzes the last step of heme biosynthesis by inserting ferrous iron into protoporphyrin IX to produce protoheme. Produces heme for photosynthetic cytochromes, and for proteins involved in abiotic and biotic stress responses. May play a role in the quality control of individual chloroplasts during photo-oxidative stress through regulation of heme biosynthesis. The protein is Ferrochelatase-2, chloroplastic of Arabidopsis thaliana (Mouse-ear cress).